The following is a 483-amino-acid chain: V-type proton ATPase subunit H (483 aa).

A phosphoserine mark is found at Ser59 and Ser483.

This sequence belongs to the V-ATPase H subunit family. As to quaternary structure, V-ATPase is a heteromultimeric enzyme made up of two complexes: the ATP-hydrolytic V1 complex and the proton translocation V0 complex. The V1 complex consists of three catalytic AB heterodimers that form a heterohexamer, three peripheral stalks each consisting of EG heterodimers, one central rotor including subunits D and F, and the regulatory subunits C and H. The proton translocation complex V0 consists of the proton transport subunit a, a ring of proteolipid subunits c9c'', rotary subunit d, subunits e and f, and the accessory subunits ATP6AP1/Ac45 and ATP6AP2/PRR. Interacts with AP2M1.

It localises to the cytoplasmic vesicle. Its subcellular location is the clathrin-coated vesicle membrane. Subunit of the V1 complex of vacuolar(H+)-ATPase (V-ATPase), a multisubunit enzyme composed of a peripheral complex (V1) that hydrolyzes ATP and a membrane integral complex (V0) that translocates protons. V-ATPase is responsible for acidifying and maintaining the pH of intracellular compartments and in some cell types, is targeted to the plasma membrane, where it is responsible for acidifying the extracellular environment. Subunit H is essential for V-ATPase activity, but not for the assembly of the complex. Involved in the endocytosis mediated by clathrin-coated pits, required for the formation of endosomes. The protein is V-type proton ATPase subunit H (Atp6v1h) of Mus musculus (Mouse).